A 527-amino-acid chain; its full sequence is Probable bifunctional tRNA threonylcarbamoyladenosine biosynthesis protein (527 aa).

Residues 1 to 323 (MPDIMPDDGL…YRADEVEVAW (323 aa)) are kae1. 3 residues coordinate Fe cation: His-110, His-114, and Tyr-131. L-threonylcarbamoyladenylate is bound by residues 131–135 (YASGA), Asp-163, Gly-176, Glu-180, and Asn-256. A Fe cation-binding site is contributed by Asp-284. The Protein kinase domain occupies 333–527 (IGPHEGGVAR…HEVELRGRYL (195 aa)). ATP is bound by residues 340-348 (VARGAEAVV) and Lys-357. Asp-444 serves as the catalytic Proton acceptor; for kinase activity.

The protein in the N-terminal section; belongs to the KAE1 / TsaD family. In the C-terminal section; belongs to the protein kinase superfamily. Tyr protein kinase family. BUD32 subfamily. In terms of assembly, component of the KEOPS complex that consists of Kae1, Bud32, Cgi121 and Pcc1; the whole complex dimerizes. Fe(2+) is required as a cofactor.

Its subcellular location is the cytoplasm. The enzyme catalyses L-seryl-[protein] + ATP = O-phospho-L-seryl-[protein] + ADP + H(+). The catalysed reaction is L-threonyl-[protein] + ATP = O-phospho-L-threonyl-[protein] + ADP + H(+). It carries out the reaction L-threonylcarbamoyladenylate + adenosine(37) in tRNA = N(6)-L-threonylcarbamoyladenosine(37) in tRNA + AMP + H(+). In terms of biological role, required for the formation of a threonylcarbamoyl group on adenosine at position 37 (t(6)A37) in tRNAs that read codons beginning with adenine. Is a component of the KEOPS complex that is probably involved in the transfer of the threonylcarbamoyl moiety of threonylcarbamoyl-AMP (TC-AMP) to the N6 group of A37. The Kae1 domain likely plays a direct catalytic role in this reaction. The Bud32 domain probably displays kinase activity that regulates Kae1 function. This is Probable bifunctional tRNA threonylcarbamoyladenosine biosynthesis protein from Methanoculleus marisnigri (strain ATCC 35101 / DSM 1498 / JR1).